A 244-amino-acid polypeptide reads, in one-letter code: Ubiquinone/menaquinone biosynthesis C-methyltransferase UbiE (244 aa).

S-adenosyl-L-methionine contacts are provided by residues T70, D91, and 117–118; that span reads DA.

It belongs to the class I-like SAM-binding methyltransferase superfamily. MenG/UbiE family.

It catalyses the reaction a 2-demethylmenaquinol + S-adenosyl-L-methionine = a menaquinol + S-adenosyl-L-homocysteine + H(+). The enzyme catalyses a 2-methoxy-6-(all-trans-polyprenyl)benzene-1,4-diol + S-adenosyl-L-methionine = a 5-methoxy-2-methyl-3-(all-trans-polyprenyl)benzene-1,4-diol + S-adenosyl-L-homocysteine + H(+). Its pathway is quinol/quinone metabolism; menaquinone biosynthesis; menaquinol from 1,4-dihydroxy-2-naphthoate: step 2/2. It functions in the pathway cofactor biosynthesis; ubiquinone biosynthesis. Its function is as follows. Methyltransferase required for the conversion of demethylmenaquinol (DMKH2) to menaquinol (MKH2) and the conversion of 2-polyprenyl-6-methoxy-1,4-benzoquinol (DDMQH2) to 2-polyprenyl-3-methyl-6-methoxy-1,4-benzoquinol (DMQH2). In Laribacter hongkongensis (strain HLHK9), this protein is Ubiquinone/menaquinone biosynthesis C-methyltransferase UbiE.